Consider the following 225-residue polypeptide: Phosphoribosylformylglycinamidine synthase subunit PurQ (225 aa).

Residues 5–225 form the Glutamine amidotransferase type-1 domain; the sequence is SAVITFPGSN…ESVVRGLVEA (221 aa). The active-site Nucleophile is Cys89. Active-site residues include His197 and Glu199.

Part of the FGAM synthase complex composed of 1 PurL, 1 PurQ and 2 PurS subunits.

The protein resides in the cytoplasm. The enzyme catalyses N(2)-formyl-N(1)-(5-phospho-beta-D-ribosyl)glycinamide + L-glutamine + ATP + H2O = 2-formamido-N(1)-(5-O-phospho-beta-D-ribosyl)acetamidine + L-glutamate + ADP + phosphate + H(+). It catalyses the reaction L-glutamine + H2O = L-glutamate + NH4(+). Its pathway is purine metabolism; IMP biosynthesis via de novo pathway; 5-amino-1-(5-phospho-D-ribosyl)imidazole from N(2)-formyl-N(1)-(5-phospho-D-ribosyl)glycinamide: step 1/2. Part of the phosphoribosylformylglycinamidine synthase complex involved in the purines biosynthetic pathway. Catalyzes the ATP-dependent conversion of formylglycinamide ribonucleotide (FGAR) and glutamine to yield formylglycinamidine ribonucleotide (FGAM) and glutamate. The FGAM synthase complex is composed of three subunits. PurQ produces an ammonia molecule by converting glutamine to glutamate. PurL transfers the ammonia molecule to FGAR to form FGAM in an ATP-dependent manner. PurS interacts with PurQ and PurL and is thought to assist in the transfer of the ammonia molecule from PurQ to PurL. This Novosphingobium aromaticivorans (strain ATCC 700278 / DSM 12444 / CCUG 56034 / CIP 105152 / NBRC 16084 / F199) protein is Phosphoribosylformylglycinamidine synthase subunit PurQ.